The primary structure comprises 393 residues: NAD(P)H-quinone oxidoreductase subunit H, chloroplastic (393 aa).

This sequence belongs to the complex I 49 kDa subunit family. NDH is composed of at least 16 different subunits, 5 of which are encoded in the nucleus.

It is found in the plastid. The protein resides in the chloroplast thylakoid membrane. It catalyses the reaction a plastoquinone + NADH + (n+1) H(+)(in) = a plastoquinol + NAD(+) + n H(+)(out). The catalysed reaction is a plastoquinone + NADPH + (n+1) H(+)(in) = a plastoquinol + NADP(+) + n H(+)(out). In terms of biological role, NDH shuttles electrons from NAD(P)H:plastoquinone, via FMN and iron-sulfur (Fe-S) centers, to quinones in the photosynthetic chain and possibly in a chloroplast respiratory chain. The immediate electron acceptor for the enzyme in this species is believed to be plastoquinone. Couples the redox reaction to proton translocation, and thus conserves the redox energy in a proton gradient. The protein is NAD(P)H-quinone oxidoreductase subunit H, chloroplastic of Ceratophyllum demersum (Rigid hornwort).